Here is a 153-residue protein sequence, read N- to C-terminus: Ribosome maturation factor RimP (153 aa).

This sequence belongs to the RimP family.

It localises to the cytoplasm. Functionally, required for maturation of 30S ribosomal subunits. In Nostoc sp. (strain PCC 7120 / SAG 25.82 / UTEX 2576), this protein is Ribosome maturation factor RimP.